The following is a 484-amino-acid chain: Glycogen synthase (484 aa).

Lys15 is a binding site for ADP-alpha-D-glucose.

Belongs to the glycosyltransferase 1 family. Bacterial/plant glycogen synthase subfamily.

The catalysed reaction is [(1-&gt;4)-alpha-D-glucosyl](n) + ADP-alpha-D-glucose = [(1-&gt;4)-alpha-D-glucosyl](n+1) + ADP + H(+). It functions in the pathway glycan biosynthesis; glycogen biosynthesis. Synthesizes alpha-1,4-glucan chains using ADP-glucose. The chain is Glycogen synthase (glgA) from Bacillus subtilis (strain 168).